The chain runs to 1300 residues: Serine protease EspP (1300 aa).

A signal peptide spans 1 to 55 (MNKIYSLKYSHITGGLIAVSELSGRVSSRATGKKKHKRILALCFLGLLQSSYSFA). Positions 57–311 (QMDISNFYIR…NQTTIDNLKN (255 aa)) constitute a Peptidase S6 domain. Residues histidine 127, aspartate 156, and serine 263 each act as charge relay system in the active site. The 267-residue stretch at 1034 to 1300 (DINGEAGAWA…AVNANFRYSF (267 aa)) folds into the Autotransporter domain.

In terms of processing, cleaved to release the mature protein from the outer membrane.

The protein resides in the periplasm. The protein localises to the secreted. It localises to the cell surface. Its subcellular location is the cell outer membrane. In terms of biological role, serine protease with cytotoxic effect. Disrupts actin cytoskeleton resulting cell detachment in vitro. The polypeptide is Serine protease EspP (espP) (Escherichia coli).